The following is an 84-amino-acid chain: Large ribosomal subunit protein bL27 (84 aa).

Residues 1 to 21 form a disordered region; it reads MAHKKGAGSTKNGRDSKPKML.

This sequence belongs to the bacterial ribosomal protein bL27 family.

This chain is Large ribosomal subunit protein bL27, found in Dehalococcoides mccartyi (strain ATCC BAA-2100 / JCM 16839 / KCTC 5957 / BAV1).